A 141-amino-acid chain; its full sequence is Putative antirestriction protein YubI (141 aa).

This sequence belongs to the antirestriction protein family.

The protein is Putative antirestriction protein YubI (yubI) of Escherichia coli (strain K12).